The chain runs to 63 residues: UPF0337 protein RA1131 (63 aa).

Residues 1–63 (MGSAKDKVAG…DAVKGAVDKT (63 aa)) are disordered. The span at 34-49 (AKGAAQEAKGGAQQAK) shows a compositional bias: low complexity. The span at 51-63 (KLKDAVKGAVDKT) shows a compositional bias: basic and acidic residues.

It belongs to the UPF0337 (CsbD) family.

This Rhizobium meliloti (strain 1021) (Ensifer meliloti) protein is UPF0337 protein RA1131.